Consider the following 296-residue polypeptide: Phosphatidylglycerol--prolipoprotein diacylglyceryl transferase (296 aa).

A disordered region spans residues 1–21 (MRHRRRPGGRSTAGGTPVSQL). 7 helical membrane passes run 34 to 54 (GPLT…VAYI), 72 to 92 (ELCA…HVIT), 108 to 128 (FFIW…GLAI), 136 to 158 (GIRF…AIGR), 195 to 215 (FHPT…FLLW), 227 to 243 (LFTL…FWVE), and 258 to 278 (LNDV…IVLQ). Arg158 lines the a 1,2-diacyl-sn-glycero-3-phospho-(1'-sn-glycerol) pocket.

It belongs to the Lgt family.

It is found in the cell membrane. It catalyses the reaction L-cysteinyl-[prolipoprotein] + a 1,2-diacyl-sn-glycero-3-phospho-(1'-sn-glycerol) = an S-1,2-diacyl-sn-glyceryl-L-cysteinyl-[prolipoprotein] + sn-glycerol 1-phosphate + H(+). The protein operates within protein modification; lipoprotein biosynthesis (diacylglyceryl transfer). Functionally, catalyzes the transfer of the diacylglyceryl group from phosphatidylglycerol to the sulfhydryl group of the N-terminal cysteine of a prolipoprotein, the first step in the formation of mature lipoproteins. In Cutibacterium acnes (strain DSM 16379 / KPA171202) (Propionibacterium acnes), this protein is Phosphatidylglycerol--prolipoprotein diacylglyceryl transferase.